We begin with the raw amino-acid sequence, 283 residues long: MQLIIVSGRSGSGKTIALRVLEDLGFYCVDNLPISLLPTLVHAVIEQYQKIAISIDVRNLPEHSEELLDSLSFLPKGVEPEILFIDSDDNTLLKRFGETRRLHPLSQKELPLLEALQAEHKMLEPIMERATWRLDSSDLSLHQLSEQVTERVLGRADKKLIIVFQSFGFKYGLPKDADFVFDARILPNPHWQPELKLLTGLDTDVQIFFRQEPLVTKFIYQLENFLDTWLPHFQRSNRSYLTIATGCTGGQHRSVYISQQLAERFEQKAVKVQVRHRELKTHG.

8 to 15 (GRSGSGKT) contributes to the ATP binding site. 56–59 (DVRN) contacts GTP.

It belongs to the RapZ-like family.

Functionally, displays ATPase and GTPase activities. This is Nucleotide-binding protein IL0393 from Idiomarina loihiensis (strain ATCC BAA-735 / DSM 15497 / L2-TR).